A 217-amino-acid polypeptide reads, in one-letter code: Adenylate kinase (217 aa).

Residue 10-15 (GAGKGT) coordinates ATP. Residues 30-59 (STGDMFREAIKRGTPLGRQAEVYIKGGRLV) form an NMP region. Residues threonine 31, arginine 36, 57–59 (RLV), 85–88 (GFPR), and glutamine 92 contribute to the AMP site. Positions 126-163 (GRRVCRQCGATYHVRYNPPAVPGKCDACGQDLVQRADD) are LID. Residue arginine 127 coordinates ATP. The Zn(2+) site is built by cysteine 130 and cysteine 133. 136-137 (TY) provides a ligand contact to ATP. Zn(2+) contacts are provided by cysteine 150 and cysteine 153. The AMP site is built by arginine 160 and arginine 171. ATP is bound at residue glutamine 199.

This sequence belongs to the adenylate kinase family. As to quaternary structure, monomer.

It is found in the cytoplasm. The enzyme catalyses AMP + ATP = 2 ADP. It participates in purine metabolism; AMP biosynthesis via salvage pathway; AMP from ADP: step 1/1. Catalyzes the reversible transfer of the terminal phosphate group between ATP and AMP. Plays an important role in cellular energy homeostasis and in adenine nucleotide metabolism. This Moorella thermoacetica (strain ATCC 39073 / JCM 9320) protein is Adenylate kinase.